The following is a 484-amino-acid chain: MDSVIQKRIFVGNIFHNADDCYSELLDRFGKFGDCQDFQFEKHNHFAFIDIRFNDEADFNKLRKSFNNVKFKGNILKVDEAKPNWESTWAVQHAKDLKEDIILNAKMKKKNWQHYKKMENVAKSWKDHKEVIAGRMREAPRKRSQLRNITFRINVNGSLKVYKCYKTKLWGYERNKELNDLVYKFTNNFWKNGYNHIVDRLDYSRAVKTVRFKNGLKQLTVSKDENVCSGEMDSDENMSEEEKEKNNVILNDLLKDFDFDKPMTLNDSDEELLTEQRKGEEEEEEEEEKEVNAPEYENVNKTKDQSTLPQEKPEERKEQDEGDGQEDNEFIPTFTKEIGQGTISNTETLRNLFNPNEAEPVSQFKLIEDSDNDIDHAKDVDVNQLEEEVSKSSDTLGLTSAPVPHVSRDKDNKNFLFFPHLQSPFLVGQTQLSKVRAPGRETMLSNWDEEFWANRGNWTRDMRRKMKDALKHRKRKQSKSGLLL.

The 77-residue stretch at 7–83 folds into the RRM domain; sequence KRIFVGNIFH…NILKVDEAKP (77 aa). Phosphoserine occurs at positions 234, 239, and 268. Residues 260-330 are disordered; sequence DKPMTLNDSD…EGDGQEDNEF (71 aa). Residues 320-329 are compositionally biased toward acidic residues; it reads DEGDGQEDNE. S370 carries the post-translational modification Phosphoserine.

Interacts with NIP7 and RRP43. Together with DBP6, URB1, URB2 and RSA3, forms an RNA-independent complex, which is required during early maturation of nascent 60S ribosomal subunits.

The protein localises to the nucleus. The protein resides in the nucleolus. Required for 60S ribosomal subunit synthesis. May be involved in assembly reactions occurring within late pre-ribosomal particles. The protein is 60S ribosome subunit biogenesis protein NOP8 (NOP8) of Saccharomyces cerevisiae (strain ATCC 204508 / S288c) (Baker's yeast).